We begin with the raw amino-acid sequence, 286 residues long: Thiamine-monophosphate kinase (286 aa).

Residues Asp22, Ser36, Thr37, and Asp38 each coordinate Mg(2+). Residue Asp45 coordinates substrate. Mg(2+) is bound by residues Asp66 and Asp111. ATP-binding positions include 110–111 (GD) and Arg136. Mg(2+) is bound at residue Asp191. Ser193 contacts ATP. Asp194 lines the Mg(2+) pocket. Tyr282 contributes to the substrate binding site.

It belongs to the thiamine-monophosphate kinase family.

The catalysed reaction is thiamine phosphate + ATP = thiamine diphosphate + ADP. Its pathway is cofactor biosynthesis; thiamine diphosphate biosynthesis; thiamine diphosphate from thiamine phosphate: step 1/1. Functionally, catalyzes the ATP-dependent phosphorylation of thiamine-monophosphate (TMP) to form thiamine-pyrophosphate (TPP), the active form of vitamin B1. This is Thiamine-monophosphate kinase from Methanospirillum hungatei JF-1 (strain ATCC 27890 / DSM 864 / NBRC 100397 / JF-1).